Consider the following 231-residue polypeptide: Putative N-acetylmannosamine-6-phosphate 2-epimerase (231 aa).

Belongs to the NanE family.

It catalyses the reaction an N-acyl-D-glucosamine 6-phosphate = an N-acyl-D-mannosamine 6-phosphate. Its pathway is amino-sugar metabolism; N-acetylneuraminate degradation; D-fructose 6-phosphate from N-acetylneuraminate: step 3/5. Converts N-acetylmannosamine-6-phosphate (ManNAc-6-P) to N-acetylglucosamine-6-phosphate (GlcNAc-6-P). This Listeria monocytogenes serotype 4b (strain F2365) protein is Putative N-acetylmannosamine-6-phosphate 2-epimerase.